Reading from the N-terminus, the 244-residue chain is ATP synthase subunit 4, mitochondrial (244 aa).

A mitochondrion-targeting transit peptide spans 1 to 35; sequence MSMSMGVRGLALRSVSKTLFSQGVRCPSMVIGARY. A Phosphoserine modification is found at Ser-144.

This sequence belongs to the eukaryotic ATPase B chain family. In terms of assembly, F-type ATPases have 2 components, CF(1) - the catalytic core - and CF(0) - the membrane proton channel. In yeast, the dimeric form of ATP synthase consists of 17 polypeptides: alpha, beta, gamma, delta, epsilon, 4 (B), 5 (OSCP), 6 (A), 8, 9 (C), d, E (Tim11), f, g, h, i/j and k.

The protein resides in the mitochondrion. Its subcellular location is the mitochondrion inner membrane. Its function is as follows. Mitochondrial membrane ATP synthase (F(1)F(0) ATP synthase or Complex V) produces ATP from ADP in the presence of a proton gradient across the membrane which is generated by electron transport complexes of the respiratory chain. F-type ATPases consist of two structural domains, F(1) - containing the extramembraneous catalytic core, and F(0) - containing the membrane proton channel, linked together by a central stalk and a peripheral stalk. During catalysis, ATP synthesis in the catalytic domain of F(1) is coupled via a rotary mechanism of the central stalk subunits to proton translocation. Part of the complex F(0) domain and the peripheric stalk, which acts as a stator to hold the catalytic alpha(3)beta(3) subcomplex and subunit a/ATP6 static relative to the rotary elements. The polypeptide is ATP synthase subunit 4, mitochondrial (ATP4) (Saccharomyces cerevisiae (strain ATCC 204508 / S288c) (Baker's yeast)).